The primary structure comprises 785 residues: Hyperosmolality-gated Ca2+ permeable channel 1.7 (785 aa).

A helical transmembrane segment spans residues I7–M27. The residue at position 54 (S54) is a Phosphoserine. 9 helical membrane-spanning segments follow: residues I101–V121, F156–M176, L373–V393, F425–M445, Y465–Q485, A510–L530, A582–F602, L628–F648, and V651–G671. The tract at residues V725–N761 is disordered. Polar residues predominate over residues T739 to N761.

Belongs to the CSC1 (TC 1.A.17) family. In terms of processing, phosphorylated and activated by BIK1.

It localises to the membrane. It catalyses the reaction Ca(2+)(in) = Ca(2+)(out). Calcium-permeable channel involved in plant stomatal immunity. The polypeptide is Hyperosmolality-gated Ca2+ permeable channel 1.7 (Arabidopsis thaliana (Mouse-ear cress)).